Consider the following 369-residue polypeptide: Probable dual-specificity RNA methyltransferase RlmN (369 aa).

E98 functions as the Proton acceptor in the catalytic mechanism. Residues 106-341 (STSRNTLCIS…VTVRKSRGAD (236 aa)) form the Radical SAM core domain. A disulfide bridge connects residues C113 and C346. C120, C124, and C127 together coordinate [4Fe-4S] cluster. S-adenosyl-L-methionine-binding positions include 171 to 172 (GE), S204, 227 to 229 (SLH), and N303. The active-site S-methylcysteine intermediate is C346.

This sequence belongs to the radical SAM superfamily. RlmN family. [4Fe-4S] cluster is required as a cofactor.

Its subcellular location is the cytoplasm. It catalyses the reaction adenosine(2503) in 23S rRNA + 2 reduced [2Fe-2S]-[ferredoxin] + 2 S-adenosyl-L-methionine = 2-methyladenosine(2503) in 23S rRNA + 5'-deoxyadenosine + L-methionine + 2 oxidized [2Fe-2S]-[ferredoxin] + S-adenosyl-L-homocysteine. It carries out the reaction adenosine(37) in tRNA + 2 reduced [2Fe-2S]-[ferredoxin] + 2 S-adenosyl-L-methionine = 2-methyladenosine(37) in tRNA + 5'-deoxyadenosine + L-methionine + 2 oxidized [2Fe-2S]-[ferredoxin] + S-adenosyl-L-homocysteine. Specifically methylates position 2 of adenine 2503 in 23S rRNA and position 2 of adenine 37 in tRNAs. The protein is Probable dual-specificity RNA methyltransferase RlmN of Chloroherpeton thalassium (strain ATCC 35110 / GB-78).